The primary structure comprises 259 residues: Aliphatic sulfonates import ATP-binding protein SsuB 1 (259 aa).

The ABC transporter domain occupies 15–229 (VECRRITRRF…QASTPGFQAL (215 aa)). Residue 47–54 (GSSGSGKT) coordinates ATP.

Belongs to the ABC transporter superfamily. Aliphatic sulfonates importer (TC 3.A.1.17.2) family. In terms of assembly, the complex is composed of two ATP-binding proteins (SsuB), two transmembrane proteins (SsuC) and a solute-binding protein (SsuA).

It localises to the cell inner membrane. The enzyme catalyses ATP + H2O + aliphatic sulfonate-[sulfonate-binding protein]Side 1 = ADP + phosphate + aliphatic sulfonateSide 2 + [sulfonate-binding protein]Side 1.. Functionally, part of the ABC transporter complex SsuABC involved in aliphatic sulfonates import. Responsible for energy coupling to the transport system. This Pseudomonas fluorescens (strain ATCC BAA-477 / NRRL B-23932 / Pf-5) protein is Aliphatic sulfonates import ATP-binding protein SsuB 1.